The sequence spans 276 residues: Bis(5'-nucleosyl)-tetraphosphatase, symmetrical (276 aa).

This sequence belongs to the Ap4A hydrolase family.

The catalysed reaction is P(1),P(4)-bis(5'-adenosyl) tetraphosphate + H2O = 2 ADP + 2 H(+). Its function is as follows. Hydrolyzes diadenosine 5',5'''-P1,P4-tetraphosphate to yield ADP. This is Bis(5'-nucleosyl)-tetraphosphatase, symmetrical from Legionella pneumophila subsp. pneumophila (strain Philadelphia 1 / ATCC 33152 / DSM 7513).